A 297-amino-acid polypeptide reads, in one-letter code: Aspartate carbamoyltransferase catalytic subunit (297 aa).

Arginine 52 and threonine 53 together coordinate carbamoyl phosphate. Lysine 80 is a binding site for L-aspartate. Carbamoyl phosphate contacts are provided by arginine 102, histidine 130, and glutamine 133. Residues arginine 167 and arginine 217 each coordinate L-aspartate. Carbamoyl phosphate-binding residues include glycine 256 and proline 257.

It belongs to the aspartate/ornithine carbamoyltransferase superfamily. ATCase family. As to quaternary structure, heterododecamer (2C3:3R2) of six catalytic PyrB chains organized as two trimers (C3), and six regulatory PyrI chains organized as three dimers (R2).

The catalysed reaction is carbamoyl phosphate + L-aspartate = N-carbamoyl-L-aspartate + phosphate + H(+). The protein operates within pyrimidine metabolism; UMP biosynthesis via de novo pathway; (S)-dihydroorotate from bicarbonate: step 2/3. Its function is as follows. Catalyzes the condensation of carbamoyl phosphate and aspartate to form carbamoyl aspartate and inorganic phosphate, the committed step in the de novo pyrimidine nucleotide biosynthesis pathway. This Helicobacter hepaticus (strain ATCC 51449 / 3B1) protein is Aspartate carbamoyltransferase catalytic subunit.